The chain runs to 86 residues: Large ribosomal subunit protein bL31 (86 aa).

The segment at 65–86 (YGMASSDSSEQKDKSSEEKKES) is disordered. Residues 73–86 (SEQKDKSSEEKKES) are compositionally biased toward basic and acidic residues.

The protein belongs to the bacterial ribosomal protein bL31 family. Type A subfamily. In terms of assembly, part of the 50S ribosomal subunit.

Binds the 23S rRNA. The sequence is that of Large ribosomal subunit protein bL31 from Prochlorococcus marinus (strain NATL2A).